The chain runs to 523 residues: GMP synthase [glutamine-hydrolyzing] (523 aa).

Positions 8–205 (KILILDFGSQ…VVKICGCERN (198 aa)) constitute a Glutamine amidotransferase type-1 domain. The Nucleophile role is filled by C85. Active-site residues include H179 and E181. The GMPS ATP-PPase domain maps to 206–398 (WTPENIIEDA…LGLPAEMLNR (193 aa)). 233 to 239 (SGGVDSS) contacts ATP.

Homodimer.

It catalyses the reaction XMP + L-glutamine + ATP + H2O = GMP + L-glutamate + AMP + diphosphate + 2 H(+). The protein operates within purine metabolism; GMP biosynthesis; GMP from XMP (L-Gln route): step 1/1. Catalyzes the synthesis of GMP from XMP. The protein is GMP synthase [glutamine-hydrolyzing] of Pasteurella multocida (strain Pm70).